The sequence spans 188 residues: Probable chorismate pyruvate-lyase (188 aa).

Residues R77, L115, and E174 each contribute to the substrate site.

This sequence belongs to the UbiC family.

The protein localises to the cytoplasm. The catalysed reaction is chorismate = 4-hydroxybenzoate + pyruvate. Its pathway is cofactor biosynthesis; ubiquinone biosynthesis. Functionally, removes the pyruvyl group from chorismate, with concomitant aromatization of the ring, to provide 4-hydroxybenzoate (4HB) for the ubiquinone pathway. The polypeptide is Probable chorismate pyruvate-lyase (Shewanella loihica (strain ATCC BAA-1088 / PV-4)).